The chain runs to 141 residues: Large ribosomal subunit protein uL11 (141 aa).

This sequence belongs to the universal ribosomal protein uL11 family. As to quaternary structure, part of the ribosomal stalk of the 50S ribosomal subunit. Interacts with L10 and the large rRNA to form the base of the stalk. L10 forms an elongated spine to which L12 dimers bind in a sequential fashion forming a multimeric L10(L12)X complex. Post-translationally, one or more lysine residues are methylated.

Forms part of the ribosomal stalk which helps the ribosome interact with GTP-bound translation factors. In Desulfotalea psychrophila (strain LSv54 / DSM 12343), this protein is Large ribosomal subunit protein uL11.